Here is a 261-residue protein sequence, read N- to C-terminus: tRNA pseudouridine synthase A (261 aa).

Catalysis depends on aspartate 51, which acts as the Nucleophile. Tyrosine 109 is a binding site for substrate.

It belongs to the tRNA pseudouridine synthase TruA family. As to quaternary structure, homodimer.

The enzyme catalyses uridine(38/39/40) in tRNA = pseudouridine(38/39/40) in tRNA. Its function is as follows. Formation of pseudouridine at positions 38, 39 and 40 in the anticodon stem and loop of transfer RNAs. In Shewanella sediminis (strain HAW-EB3), this protein is tRNA pseudouridine synthase A.